The primary structure comprises 587 residues: Proteasome-associated ATPase (587 aa).

Residues 9-94 adopt a coiled-coil conformation; that stretch reads ARKAQHDAEI…KEEVDRLAQP (86 aa). ATP is bound at residue 276 to 281; that stretch reads GCGKTL. The interval 586-587 is docks into pockets in the proteasome alpha-ring; that stretch reads YL.

The protein belongs to the AAA ATPase family. As to quaternary structure, homohexamer. Assembles into a hexameric ring structure that caps the 20S proteasome core. Strongly interacts with the prokaryotic ubiquitin-like protein Pup through a hydrophobic interface; the interacting region of ARC lies in its N-terminal coiled-coil domain. There is one Pup binding site per ARC hexamer ring. Upon ATP-binding, the C-terminus of ARC interacts with the alpha-rings of the proteasome core, possibly by binding to the intersubunit pockets.

Its pathway is protein degradation; proteasomal Pup-dependent pathway. In terms of biological role, ATPase which is responsible for recognizing, binding, unfolding and translocation of pupylated proteins into the bacterial 20S proteasome core particle. May be essential for opening the gate of the 20S proteasome via an interaction with its C-terminus, thereby allowing substrate entry and access to the site of proteolysis. Thus, the C-termini of the proteasomal ATPase may function like a 'key in a lock' to induce gate opening and therefore regulate proteolysis. The polypeptide is Proteasome-associated ATPase (Thermomonospora curvata (strain ATCC 19995 / DSM 43183 / JCM 3096 / KCTC 9072 / NBRC 15933 / NCIMB 10081 / Henssen B9)).